The chain runs to 1288 residues: VWFA and cache domain-containing protein 1 (1288 aa).

The N-terminal stretch at 1 to 49 is a signal peptide; sequence MAREPEEEETVRPAAVVRRCPRCPGWPGAPRPPLWLLCLVACWILGAVA. Residues 50–1109 are Extracellular-facing; that stretch reads DADFSILDEA…ITLNMIKSAP (1060 aa). A glycan (N-linked (GlcNAc...) asparagine) is linked at Asn-159. In terms of domain architecture, VWFA spans 242–457; that stretch reads HIVVILDHGA…TTVGRFYTNL (216 aa). Cache domains are found at residues 467-546 and 786-867; these read FSLP…SEPP and LTGP…HPTL. The helical transmembrane segment at 1110–1130 threads the bilayer; the sequence is VGPVAGGIMGCIMVLVLAVYA. Over 1131-1288 the chain is Cytoplasmic; sequence YRHQIHRRSH…VTVHTVDAEC (158 aa). Disordered stretches follow at residues 1157-1176 and 1187-1237; these read NLEN…RGII and ERHV…VDVG. Over residues 1159 to 1174 the composition is skewed to basic and acidic residues; the sequence is ENDRDERDDDSHEDRG. Positions 1210–1229 are enriched in polar residues; it reads GYSTMSPQEDSENPPCNNDP.

It belongs to the calcium channel subunit alpha-2/delta family.

It localises to the membrane. Functionally, may regulate voltage-dependent calcium channels. This Mus musculus (Mouse) protein is VWFA and cache domain-containing protein 1 (Cachd1).